We begin with the raw amino-acid sequence, 565 residues long: NAD-dependent malic enzyme (565 aa).

Y104 (proton donor) is an active-site residue. Residue R157 participates in NAD(+) binding. The Proton acceptor role is filled by K175. A divalent metal cation-binding residues include E246, D247, and D270. NAD(+) is bound by residues D270 and N418.

This sequence belongs to the malic enzymes family. As to quaternary structure, homotetramer. Requires Mg(2+) as cofactor. Mn(2+) is required as a cofactor.

It catalyses the reaction (S)-malate + NAD(+) = pyruvate + CO2 + NADH. It carries out the reaction oxaloacetate + H(+) = pyruvate + CO2. This Escherichia coli (strain SMS-3-5 / SECEC) protein is NAD-dependent malic enzyme.